Reading from the N-terminus, the 498-residue chain is MEKWRFDSMLFSGVLEYRCGLSKSINSLGDPIENTSVNEDPIINDMDKDIPSGSDSDNSSYSNVDHLVGVRYIRNFLSDDTFLVRDSNRDSYTIYFDIENQIFEIDNHDSFISEPENSFYSYQNSSYLNNVSKNDDPRYDRYVYDTQYSWNNHINSCIGSYLRYQICIDSDILTSSDNYNDNYIYTYICGERVNSNESESSNIRTGADDSDLTTIRESSNDLDVTQKYRHLWVQCENCYGLNYKRFLKSKMNICEHCGCHLKMSSSDRIELLIDPGTWDPMDEDMVSLDPIEFNSEEEPYKDRIDSYQRKTGLTEAVQTGTGKLNGIPVAIGVMDFQFMGGSMGSVVGEKITRLIEYATNQSLPLILVCASGGARMQEGSLSLMQMAKISSALYDYQSNKKLFYIAILTSPTTGGVTASFGMLGDIIIAEPNAYIAFAGKRVIEQTLNKTVPEGSQVAEYLFHKGLFDPIVPRNPLKGVLSELFQLHAFFPLNQNSIK.

The tract at residues 36 to 59 (SVNEDPIINDMDKDIPSGSDSDNS) is disordered. Residues 231 to 498 (LWVQCENCYG…FFPLNQNSIK (268 aa)) form the CoA carboxyltransferase N-terminal domain. 4 residues coordinate Zn(2+): Cys-235, Cys-238, Cys-254, and Cys-257. A C4-type zinc finger spans residues 235-257 (CENCYGLNYKRFLKSKMNICEHC).

It belongs to the AccD/PCCB family. In terms of assembly, acetyl-CoA carboxylase is a heterohexamer composed of biotin carboxyl carrier protein, biotin carboxylase and 2 subunits each of ACCase subunit alpha and ACCase plastid-coded subunit beta (accD). It depends on Zn(2+) as a cofactor.

Its subcellular location is the plastid. The protein resides in the chloroplast stroma. It carries out the reaction N(6)-carboxybiotinyl-L-lysyl-[protein] + acetyl-CoA = N(6)-biotinyl-L-lysyl-[protein] + malonyl-CoA. It participates in lipid metabolism; malonyl-CoA biosynthesis; malonyl-CoA from acetyl-CoA: step 1/1. Its function is as follows. Component of the acetyl coenzyme A carboxylase (ACC) complex. Biotin carboxylase (BC) catalyzes the carboxylation of biotin on its carrier protein (BCCP) and then the CO(2) group is transferred by the transcarboxylase to acetyl-CoA to form malonyl-CoA. The chain is Acetyl-coenzyme A carboxylase carboxyl transferase subunit beta, chloroplastic from Morus indica (Mulberry).